We begin with the raw amino-acid sequence, 344 residues long: Protein RecA (344 aa).

66 to 73 (GPESSGKT) provides a ligand contact to ATP.

The protein belongs to the RecA family.

Its subcellular location is the cytoplasm. In terms of biological role, can catalyze the hydrolysis of ATP in the presence of single-stranded DNA, the ATP-dependent uptake of single-stranded DNA by duplex DNA, and the ATP-dependent hybridization of homologous single-stranded DNAs. It interacts with LexA causing its activation and leading to its autocatalytic cleavage. In Azoarcus sp. (strain BH72), this protein is Protein RecA.